A 105-amino-acid polypeptide reads, in one-letter code: Replication initiation control protein YabA (105 aa).

Zn(2+) is bound by residues H79, C81, C95, and C98.

This sequence belongs to the YabA family. As to quaternary structure, homotetramer. Interacts with both DnaA and DnaN, acting as a bridge between these two proteins. Zn(2+) is required as a cofactor.

The protein resides in the cytoplasm. Its subcellular location is the nucleoid. Functionally, involved in control of chromosome replication initiation. Inhibits the cooperative binding of DnaA to the oriC region, thus negatively regulating initiation of chromosome replication. Inhibits the ability of DnaA-ATP to form a helix on DNA; does not disassemble preformed DnaA-DNA helices. Decreases the residence time of DnaA on the chromosome at its binding sites (oriC, replication forks and promoter-binding sites). Tethers DnaA to the replication machinery via the DNA polymerase beta sliding clamp subunit (dnaN). Associates with oriC and other DnaA targets on the chromosome in a DnaA-dependent manner. This chain is Replication initiation control protein YabA, found in Streptococcus pneumoniae serotype 2 (strain D39 / NCTC 7466).